The sequence spans 238 residues: Fatty acid metabolism regulator protein (238 aa).

The HTH gntR-type domain occupies 6–74 (KGPASFAEKY…HGKPTRVNNF (69 aa)). Positions 34-53 (ERELSELIGVTRTTLREVLQ) form a DNA-binding region, H-T-H motif.

In terms of assembly, homodimer.

It is found in the cytoplasm. Multifunctional regulator of fatty acid metabolism. The polypeptide is Fatty acid metabolism regulator protein (Shewanella putrefaciens (strain CN-32 / ATCC BAA-453)).